Reading from the N-terminus, the 280-residue chain is MPNLSGLKTEISSVRNISKITNAMQLVASAKLRKISKKVIDTHNYVSEVYSLFNDIIRQTDKSVFLKESNFKANKTLWVVINSNLGLCGGYNSNVNKLVLQNLKLEDEIFAIGSKAVSFFRSKKIKIKNQITDIDINFTNKKARSISNDLLDMYINHEFDEIKIVYTKFINNVTFEPAIIRIFPIIKLENNFKHSQSLVFEPDAEQILSSTILIYINAIIYGTIIESQVSEQASRRTAMENATNNGKNLEQTLSLKYNRQRQGAITQEISEIVSGANNKS.

Belongs to the ATPase gamma chain family. As to quaternary structure, F-type ATPases have 2 components, CF(1) - the catalytic core - and CF(0) - the membrane proton channel. CF(1) has five subunits: alpha(3), beta(3), gamma(1), delta(1), epsilon(1). CF(0) has three main subunits: a, b and c.

It localises to the cell membrane. Its function is as follows. Produces ATP from ADP in the presence of a proton gradient across the membrane. The gamma chain is believed to be important in regulating ATPase activity and the flow of protons through the CF(0) complex. This is ATP synthase gamma chain from Mycoplasma capricolum subsp. capricolum (strain California kid / ATCC 27343 / NCTC 10154).